Here is a 386-residue protein sequence, read N- to C-terminus: CRISPR system endoribonuclease Csm6' (386 aa).

The interval 1–146 (MRVLISAVGD…ASNENIGHDN (146 aa)) is CARF domain. An HEPN domain region spans residues 147-386 (DENIDELIEV…LNKILLTKLN (240 aa)).

This sequence belongs to the CRISPR-associated Csm6 family. Homodimer. The composite ssRNase active site is formed at the dimer interface.

Its activity is regulated as follows. Non-specific ssRNase activity is stimulated about 1000-fold by cyclic oligoadenylate (cOA), a second messenger produced by Cas10 of the ternary Csm effector complex in the presence of a cognate target RNA. CRISPR (clustered regularly interspaced short palindromic repeat) is an adaptive immune system that provides protection against mobile genetic elements (viruses, transposable elements and conjugative plasmids). CRISPR clusters contain spacers, sequences complementary to antecedent mobile elements, and target invading nucleic acids. CRISPR clusters are transcribed and processed into CRISPR RNA (crRNA). The type III-A Csm complex binds crRNA and acts as a crRNA-guided RNase, DNase and cyclic oligoadenylate synthase; binding of target RNA cognate to the crRNA is required for all activities. In a heterologous host this Csm effector complex restricts ssRNA phage MS2, suggesting it may target RNA viruses in vivo. This protein is not part of the Csm complex. In terms of biological role, csm functions as a non-specific ssDNase. Base-pairing between crRNA and target RNA to form a ternary Csm complex activates a ssDNase activity; target RNA cleavage suppresses the ssDNase, a temporal control that prevents uncontrolled DNA degradation. Viral RNA transcripts probably tether the Csm complex to the viral genome, recruiting Cas10 ssDNA activity which is able to degrade DNA in the transcription bubble, spatially controlling the DNase activity. Functionally, a single-strand-specific endoribonuclease (ssRNase) that is approximately 1000-fold stimulated by cyclic oligoadenylate (cOA); although several species of cOA are synthesized by this organism only cyclic hexaadenylate (cA6) stimulates the ssRNase activity. Cleaves preferentially within GA or AA dinucleotides, although the presence of cA6 broadens the preference. The polypeptide is CRISPR system endoribonuclease Csm6' (Streptococcus thermophilus).